A 487-amino-acid chain; its full sequence is ATP synthase subunit beta (487 aa).

164 to 171 (GGAGVGKT) is an ATP binding site.

The protein belongs to the ATPase alpha/beta chains family. As to quaternary structure, F-type ATPases have 2 components, CF(1) - the catalytic core - and CF(0) - the membrane proton channel. CF(1) has five subunits: alpha(3), beta(3), gamma(1), delta(1), epsilon(1). CF(0) has four main subunits: a(1), b(1), b'(1) and c(9-12).

It localises to the cellular thylakoid membrane. It carries out the reaction ATP + H2O + 4 H(+)(in) = ADP + phosphate + 5 H(+)(out). In terms of biological role, produces ATP from ADP in the presence of a proton gradient across the membrane. The catalytic sites are hosted primarily by the beta subunits. The polypeptide is ATP synthase subunit beta (Synechococcus sp. (strain WH7803)).